Consider the following 97-residue polypeptide: Large ribosomal subunit protein uL23 (97 aa).

It belongs to the universal ribosomal protein uL23 family. Part of the 50S ribosomal subunit. Contacts protein L29, and trigger factor when it is bound to the ribosome.

Its function is as follows. One of the early assembly proteins it binds 23S rRNA. One of the proteins that surrounds the polypeptide exit tunnel on the outside of the ribosome. Forms the main docking site for trigger factor binding to the ribosome. The chain is Large ribosomal subunit protein uL23 from Anaeromyxobacter dehalogenans (strain 2CP-1 / ATCC BAA-258).